We begin with the raw amino-acid sequence, 938 residues long: Myocardin (938 aa).

Residues 12 to 27 carry the MEF2C-binding motif; it reads IRRKFRSVLQLRLQQR. RPEL repeat units follow at residues 18–43, 62–87, and 106–131; these read SVLQLRLQQRRTQEQLANQGLIPPLK, DSLRRKVRNRSDRASLVNMHILQAST, and DDLNEKIALRPGPLELVEKNILPMDS. A disordered region spans residues 37–64; the sequence is GLIPPLKSPTEFHDPRKKLDSAKTEDSL. Residues 46–64 are compositionally biased toward basic and acidic residues; sequence TEFHDPRKKLDSAKTEDSL. Residues 153 to 205 are HDAC5-binding; it reads FEDDSSRDGLSPDQARSEDPQGSGGSTPDIKSTEAPLAGPLDTIQDLTPGSES. 2 disordered regions span residues 155–282 and 339–381; these read DDSS…PPPM and NEQM…PLPP. Residues 210 to 221 show a composition bias toward polar residues; sequence TASQLSNQSDSG. Over residues 248 to 265 the composition is skewed to basic residues; the sequence is NRHKKPKDPKPKVKKLKY. Positions 345-360 are enriched in low complexity; the sequence is NPNSSSTPLNNTPLSP. Over residues 361-372 the composition is skewed to polar residues; it reads VKNSLSGQTGVS. Residues 383–417 form the SAP domain; the sequence is LDDLKVSELRQQLRIRGLPVSGTKTALVDRLRPFQ. Residues Ser-457, Ser-461, Ser-465, and Ser-469 each carry the phosphoserine; by GSK3-beta modification. Residues 501 to 521 form a disordered region; sequence ESLLSSLNGGSGPSEPDGLDS. A coiled-coil region spans residues 522–566; it reads EKDKMLVEKQKVINQLTWKLRQEQRQVEELRMQLQKQKSGCNDQK. Residues 586–606 form a disordered region; that stretch reads AAQQASGKGQGHSSDSPPPAC. Residues 588–600 are compositionally biased toward polar residues; it reads QQASGKGQGHSSD. A phosphoserine; by GSK3-beta mark is found at Ser-627, Ser-631, Ser-635, and Ser-639. Polar residues-rich tracts occupy residues 667-694 and 701-713; these read GAQRENHGVSSPNSSQGCAQMTGLQSSD and SIPSPTFPKSSPT. The tract at residues 667–734 is disordered; it reads GAQRENHGVS…DAVKQQMTRS (68 aa). The tract at residues 717 to 938 is required for interaction with and ubiquitination by STUB1; sequence ITQPPSYEDA…SPMDLHLQQW (222 aa). 3 positions are modified to phosphoserine; by MAPK1 and MAPK3: Ser-815, Ser-862, and Ser-869. Thr-896 carries the phosphothreonine; by MAPK1 and MAPK3 modification.

Homodimer. Interacts with MLLT7/FOXO4. Interacts with SRF, its association does not depend on specific DNA sequences for ternary complex formation. Interacts (via C-terminal) with EP300 (via the CREB-binding domain). Interacts with HDAC4 and HDAC5. Interacts with MEF2C. Interacts (via C-terminus) with STUB1/CHIP. Interacts with PURB. Post-translationally, ubiquitinated; by STUB1/CHIP at the C-terminus, leading to its degradation by the proteasome. Phosphorylation by GSK3B is required for STUB1/CHIP-mediated ubiquitination. Phosphorylation negatively regulates transcriptional activity. Phosphorylated; by GSK3B. In terms of tissue distribution, abundantly expressed in the heart, aorta media and bladder, weakly expressed in the stomach, intestine and lung.

It localises to the nucleus. Functionally, smooth muscle cells (SM) and cardiac muscle cells-specific transcriptional factor which uses the canonical single or multiple CArG boxes DNA sequence. Acts as a cofactor of serum response factor (SRF) with the potential to modulate SRF-target genes. Plays a crucial role in cardiogenesis, urinary bladder development, and differentiation of the smooth muscle cell lineage (myogenesis). Positively regulates the transcription of genes involved in vascular smooth muscle contraction. This is Myocardin (Myocd) from Rattus norvegicus (Rat).